The sequence spans 236 residues: 3-oxoacyl-[acyl-carrier-protein] reductase (236 aa).

Methionine 1 carries the N-acetylmethionine modification. Residues 11–14 and 34–35 each bind NADP(+); these read SRGI and RN. Position 40 is an N6-acetyllysine (lysine 40). Residues aspartate 56 and 83–85 contribute to the NADP(+) site; that span reads AAG. Lysine 96 bears the N6-acetyllysine mark. Serine 134 provides a ligand contact to substrate. Residues tyrosine 147, lysine 151, and 180–182 contribute to the NADP(+) site; that span reads IRT. The active-site Proton acceptor is tyrosine 147. The residue at position 194 (lysine 194) is an N6-acetyllysine.

It belongs to the short-chain dehydrogenases/reductases (SDR) family. Homotetramer (in vitro). Heterotetramer with HSD17B8; contains two molecules each of HSD17B8 and CBR4. Does not form homotetramers when HSD17B8 is coexpressed, only heterotetramers (in vitro).

The protein localises to the mitochondrion matrix. The enzyme catalyses a (3R)-hydroxyacyl-[ACP] + NADP(+) = a 3-oxoacyl-[ACP] + NADPH + H(+). It catalyses the reaction a quinone + NADPH + H(+) = a quinol + NADP(+). The protein operates within lipid metabolism; fatty acid biosynthesis. Component of the heterotetramer complex KAR (3-ketoacyl-[acyl carrier protein] reductase or 3-ketoacyl-[ACP] reductase) that forms part of the mitochondrial fatty acid synthase (mtFAS). Beta-subunit of the KAR heterotetramer complex, responsible for the 3-ketoacyl-ACP reductase activity of the mtFAS, reduces 3-oxoacyl-[ACP] to (3R)-hydroxyacyl-[ACP] in a NADPH-dependent manner with no chain length preference, thereby participating in mitochondrial fatty acid biosynthesis. The homotetramer has NADPH-dependent quinone reductase activity (in vitro), hence could play a role in protection against cytotoxicity of exogenous quinones. As a heterotetramer, it can also reduce 9,10-phenanthrenequinone, 1,4-benzoquinone and various other o-quinones and p-quinones (in vitro). This is 3-oxoacyl-[acyl-carrier-protein] reductase (Cbr4) from Mus musculus (Mouse).